Consider the following 590-residue polypeptide: MKMSEVPRIKVFRPTWEEFKDFPKYVAYMESQGAHKAGLAKVVPPPEWVPRRSGYADLDALNVTIPAPICQVVTGKQGYYQQINIQKKPLTVKQFSELASTERYATPKHFDFEDLERKYWKNITYVAPIYGADVSGSITDTDQDSWNINRLGTILDYVNKDYNIQIDGVNTAYLYFGMWKTTFAWHTEDMDLYSINYLHFGAPKTWYVVPPECGRKLEKVANQYFPASYKNCNAYLRHKMTLISPQILKQHDVPVSKITQEAGEIMITFPFGYHAGFNHGFNCAESTNFAMERWIEYGKRAVQCTCSNDMVKISMDTFVKRFQSDRYDLWMEGRDVGRHPEDPPNAVLSAAPLPPHLDVLLCDKKMKKQCNPTKAKSFKERNPDLDLDEIQQNPNVPDDVKAMLKESVLTLDTGDLATDEADFPNEDAMSLQSPANLKTKQELLEYIDDGTEDDDEEEDFKRRKQKRRYDADYDDDWLASKRKTNSRNNRGRSPRTKDDRSISPASSTSSTSRGARRGKASGTPRKTPARRKKDSITTSPAVSSAATAVKTPTSAVVAGTTSIATTTTPPADGGGGESSSLGSHCTTASP.

The JmjN domain maps to 9 to 51 (IKVFRPTWEEFKDFPKYVAYMESQGAHKAGLAKVVPPPEWVPR). Tyrosine 130 provides a ligand contact to 2-oxoglutarate. Positions 140–306 (DTDQDSWNIN…YGKRAVQCTC (167 aa)) constitute a JmjC domain. Fe cation-binding residues include histidine 186 and glutamate 188. The 2-oxoglutarate site is built by asparagine 196 and lysine 204. Cysteine 232 and histidine 238 together coordinate Zn(2+). Position 239 (lysine 239) interacts with 2-oxoglutarate. Fe cation is bound at residue histidine 274. Zn(2+)-binding residues include cysteine 304 and cysteine 306. Disordered regions lie at residues 372–395 (PTKAKSFKERNPDLDLDEIQQNPN) and 417–590 (ATDE…TASP). Positions 445 to 458 (EYIDDGTEDDDEEE) are enriched in acidic residues. The segment covering 480–494 (SKRKTNSRNNRGRSP) has biased composition (basic residues). Composition is skewed to low complexity over residues 502–513 (ISPASSTSSTSR) and 537–571 (TTSPAVSSAATAVKTPTSAVVAGTTSIATTTTPPA).

It belongs to the JHDM3 histone demethylase family. Fe(2+) serves as cofactor.

Its subcellular location is the nucleus. It catalyses the reaction N(6),N(6),N(6)-trimethyl-L-lysyl(9)-[histone H3] + 2 2-oxoglutarate + 2 O2 = N(6)-methyl-L-lysyl(9)-[histone H3] + 2 formaldehyde + 2 succinate + 2 CO2. Functionally, probable histone demethylase that specifically demethylates 'Lys-9' and 'Lys-36' residues of histone H3, thereby playing a central role in histone code. Demethylation of Lys residue generates formaldehyde and succinate. This Drosophila melanogaster (Fruit fly) protein is Probable lysine-specific demethylase 4B (Kdm4B).